Reading from the N-terminus, the 551-residue chain is MENSSKAIVDERSGYCKSNSIFYSKREPVQLPQNHSVDVTTFISSRAHHGKIAFIDAATGRHLTFPQLWRAVDSVATCLSAMGIRKGDVILLLSPNSIYFPVVCLAVMSLGAIITTTNPLNTPREIAKQITDSKPVLAFTIPQLVSKIAGSNLPIVIIDDEVKSSLEKTLNIVSSLGEMMRKEPSPNRIGYRVNQEDTATLLYSSGTTGASKGVVSSHKNLIAMVQTILSRFGTEDGEHTFICTVPMFHIYGLAAFAMGLLSSGSTIVILSKFEIHEMLSAIEKYRATYLPLVPPILMALLKNANHIRAKYDLSSLQSVLSGGAPLSKEVIEGFVENYPTVSILQGYGLTESTGIGASTDCLQESRRYGTAGMLSPSMEAKIVNPETGEALSVNRTGELWLRGPTIMKGYFSNEEATSSTIDSEGWLRTGDLCYIDEDGFIFVVDRLKELIKYKGYQVAPAELEALLLSHPEISDAAVIPYPDKEAGQFPMAYVVRKGGSNLSESTVMDFIAKLVAPYKRIRKVAFVASIPKNPSGKILRKDLIKLATSKL.

ATP is bound by residues 204–212, 345–350, aspartate 431, 443–446, and lysine 537; these read SSGTTGASK, QGYGLT, and VVDR. An SBD1 region spans residues 274 to 345; the sequence is EIHEMLSAIE…ENYPTVSILQ (72 aa). The tract at residues 346 to 410 is SBD2; it reads GYGLTESTGI…LRGPTIMKGY (65 aa).

Belongs to the ATP-dependent AMP-binding enzyme family. As to expression, mostly expressed at low levels in glandular trichomes (lupulin glands) after flowering, and, to a lower extent, in stems, leaves, cones and flowers.

The protein resides in the cytoplasm. It localises to the cytosol. The sequence is that of Probable CoA ligase CCL5 from Humulus lupulus (European hop).